The chain runs to 306 residues: uncharacterized protein (306 aa).

9 consecutive transmembrane segments (helical) span residues 13–33 (VLLS…FAFI), 53–73 (PLPM…FAWG), 86–106 (ITGL…IWAA), 112–132 (VGLT…IVPL), 147–167 (WGMM…GMLF), 177–197 (AFVS…VIAI), 214–234 (AGIA…AWLI), 246–268 (VSLI…VTFF), and 272–294 (VAVP…GYML).

The protein resides in the cell membrane. This is an uncharacterized protein from Bacillus subtilis (strain 168).